The sequence spans 1210 residues: Multimerin-1 (1210 aa).

The N-terminal stretch at 1–19 (MLGLKFLVLLSILWGRVFR) is a signal peptide. The disordered stretch occupies residues 57 to 102 (ATQNPSTQGPAAAERSSEDDVLLQSTSQPSETSTPPEGRHQTPLEK). A compositionally biased stretch (low complexity) spans 80–92 (QSTSQPSETSTPP). Asn133 carries N-linked (GlcNAc...) asparagine glycosylation. Polar residues predominate over residues 143-155 (SRKSDQQEVSTKS). The interval 143-190 (SRKSDQQEVSTKSAGDMGNRSARETHLRRSDNSRNQRPSYQKPSFETT) is disordered. The N-linked (GlcNAc...) asparagine glycan is linked to Asn161. Basic and acidic residues predominate over residues 163-176 (SARETHLRRSDNSR). Over residues 177 to 189 (NQRPSYQKPSFET) the composition is skewed to polar residues. The EMI domain maps to 192-267 (GKNWCAHVHT…PGYIGPNCQL (76 aa)). 3 cysteine pairs are disulfide-bonded: Cys196/Cys257, Cys222/Cys230, and Cys256/Cys265. Thr201 carries an O-linked (Fuc) threonine glycan. The O-linked (Fuc) threonine glycan is linked to Thr250. Residues 276 to 299 (AHSNQAESHTAVDQGRAQQQKQDC) are disordered. Positions 303–338 (AMIQKLAEQLSQQERKLSLLQKKVDNASLVADDMRN) form a coiled coil. Asn328, Asn415, Asn491, Asn525, Asn560, Asn602, Asn712, Asn765, Asn810, Asn822, Asn903, Asn915, Asn963, and Asn1000 each carry an N-linked (GlcNAc...) asparagine glycan. A coiled-coil region spans residues 564-690 (LLEMEKESAR…RHNLLRNEVQ (127 aa)). Residues 809-846 (FNETTSQVNKCQQNMSHLEENMLSVTKTAKEFETRLQG) adopt a coiled-coil conformation. The 37-residue stretch at 1023–1059 (EHSSCSSFPCQNGGTCISGRSNFICACRHPFMGDTCT) folds into the EGF-like domain. 3 disulfide bridges follow: Cys1027-Cys1038, Cys1032-Cys1047, and Cys1049-Cys1058. The O-linked (Fuc) threonine glycan is linked to Thr1037. A C1q domain is found at 1078–1210 (RYAPMVAFFV…TFSGYLLYRT (133 aa)).

In terms of assembly, multimeric. Composed of varying sized, disulfide-linked multimers, the smallest of which is a homotrimer. Proteolysis of the promultimerin in the N-terminal region, leads to the mature p155 form that is stored in platelets. Interacts with factor V/Va. In terms of processing, extensively N-glycosylated. Post-translationally, O-fucosylated within the EMI domain (at Thr-201 and Thr-250) by FUT10/POFUT3 and FUT11/POFUT4. O-fucosylation at Thr-201 and Thr-1037 are required for facilitating protein folding and secretion.

The protein resides in the secreted. In terms of biological role, carrier protein for platelet (but not plasma) factor V/Va. Plays a role in the storage and stabilization of factor V in platelets. Upon release following platelet activation, may limit platelet and plasma factor Va-dependent thrombin generation. Ligand for integrin alpha-IIb/beta-3 and integrin alpha-V/beta-3 on activated platelets, and may function as an extracellular matrix or adhesive protein. The polypeptide is Multimerin-1 (Mus musculus (Mouse)).